Reading from the N-terminus, the 373-residue chain is DNA replication and repair protein RecF (373 aa).

Residue 30–37 participates in ATP binding; that stretch reads GENAQGKT.

It belongs to the RecF family.

The protein localises to the cytoplasm. The RecF protein is involved in DNA metabolism; it is required for DNA replication and normal SOS inducibility. RecF binds preferentially to single-stranded, linear DNA. It also seems to bind ATP. The sequence is that of DNA replication and repair protein RecF from Limosilactobacillus fermentum (strain NBRC 3956 / LMG 18251) (Lactobacillus fermentum).